The sequence spans 920 residues: Glutamate receptor 2.2 (920 aa).

An N-terminal signal peptide occupies residues 1-24; the sequence is MKNSKLFFRFLFLFFFFCLESSRG. Topologically, residues 25–580 are extracellular; that stretch reads QDNGKTQVNI…DKFSFLKPLS (556 aa). Residues Asn53, Asn204, Asn267, Asn331, Asn342, Asn477, and Asn542 are each glycosylated (N-linked (GlcNAc...) asparagine). The chain crosses the membrane as a helical span at residues 581-601; that stretch reads IELWLTTLVFFFLVGISVWTL. At 602–610 the chain is on the cytoplasmic side; it reads EHRVNSDFR. A helical membrane pass occupies residues 611–631; the sequence is GPANYQASTIFWFAFSTMVFA. The Cytoplasmic segment spans residues 632–635; the sequence is PRER. Residues 636 to 656 traverse the membrane as a helical segment; it reads VLSFGARSLVVTWYFVLLVLT. The Extracellular segment spans residues 657-830; it reads QSYTASLASL…VTAIQLGVGS (174 aa). N-linked (GlcNAc...) asparagine glycosylation is present at Asn702. The helical transmembrane segment at 831–851 threads the bilayer; that stretch reads FWFLFLVVFVVCVLALGKFTF. Residues 852–920 are Cytoplasmic-facing; that stretch reads CFLWKTKGKD…QVNQTDPDCL (69 aa).

Belongs to the glutamate-gated ion channel (TC 1.A.10.1) family. As to quaternary structure, may form heteromers. Expressed predominantly in roots.

The protein resides in the membrane. Its function is as follows. Glutamate-gated receptor that probably acts as a non-selective cation channel. May be involved in light-signal transduction and calcium homeostasis via the regulation of calcium influx into cells. The protein is Glutamate receptor 2.2 (GLR2.2) of Arabidopsis thaliana (Mouse-ear cress).